Reading from the N-terminus, the 470-residue chain is E3 ubiquitin-protein ligase TRIM21 (470 aa).

An RING-type zinc finger spans residues 20-59; the sequence is CSICLDPMVEPMSIECGHCFCKECIFEVGKNGGSSCPECR. Zn(2+)-binding residues include Cys96, His99, Cys118, and His124. A B box-type zinc finger spans residues 96 to 127; sequence CMKHGEKLHLFCEEDGQALCWVCAQSGKHRDH. A coiled-coil region spans residues 188 to 250; it reads LQNSLLAQEE…RGSELELLQE (63 aa). One can recognise a B30.2/SPRY domain in the interval 272 to 470; that stretch reads DLTSTCPVPG…APLKLCPLKM (199 aa).

Belongs to the TRIM/RBCC family. In terms of assembly, homotrimer. Component of a SCF(SKP2)-like complex containing CUL1, SKP1, TRIM21 and SKP2. Interacts with CALR, CUL1, FBXW11, HSPA5, IKBKB, IRF3, SKP1 and VCP. Interacts with SKP2; the interaction with SKP2 does not depend on an intact F-box domain. Interacts (via N-terminus and C-terminus) with DCP2 (via N-terminus and C-terminus). Interacts (via C-terminus) with IRF8 (via C-terminus). Interacts with ULK1, BECN1 and with ATG8 family members, including GABARAP, GABARAPL1, GABARAPL2 and MAP1LC3C/LC3C. Interacts with TRIM21 and SQSTM1/sequestosome 1. Interacts with IRF3. Interacts (via the SPRY domain) with NMI (via coiled-coil domain); the interaction promotes 'Lys-63'-linked ubiquitination of NMI. Interacts with IFI35 and NMI; the interaction facilitates NMI-IFI35 complex formation. Post-translationally, autoubiquitinated; does not lead to its proteasomal degradation. Deubiquitinated by USP4; leading to its stabilization. Autoubiquitinated.

It is found in the cytoplasm. The protein localises to the cytoplasmic vesicle. The protein resides in the autophagosome. Its subcellular location is the nucleus. It localises to the P-body. It is found in the stress granule. It catalyses the reaction S-ubiquitinyl-[E2 ubiquitin-conjugating enzyme]-L-cysteine + [acceptor protein]-L-lysine = [E2 ubiquitin-conjugating enzyme]-L-cysteine + N(6)-ubiquitinyl-[acceptor protein]-L-lysine.. It functions in the pathway protein modification; protein ubiquitination. In terms of biological role, E3 ubiquitin-protein ligase whose activity is dependent on E2 enzymes, UBE2D1, UBE2D2, UBE2E1 and UBE2E2. Forms a ubiquitin ligase complex in cooperation with the E2 UBE2D2 that is used not only for the ubiquitination of USP4 and IKBKB but also for its self-ubiquitination. Component of cullin-RING-based SCF (SKP1-CUL1-F-box protein) E3 ubiquitin-protein ligase complexes such as SCF(SKP2)-like complexes. A TRIM21-containing SCF(SKP2)-like complex is shown to mediate ubiquitination of CDKN1B ('Thr-187' phosphorylated-form), thereby promoting its degradation by the proteasome. Monoubiquitinates IKBKB that will negatively regulates Tax-induced NF-kappa-B signaling. Negatively regulates IFN-beta production post-pathogen recognition by catalyzing polyubiquitin-mediated degradation of IRF3. Mediates the ubiquitin-mediated proteasomal degradation of IgG1 heavy chain, which is linked to the VCP-mediated ER-associated degradation (ERAD) pathway. Promotes IRF8 ubiquitination, which enhanced the ability of IRF8 to stimulate cytokine genes transcription in macrophages. Plays a role in the regulation of the cell cycle progression. Enhances the decapping activity of DCP2. Exists as a ribonucleoprotein particle present in all mammalian cells studied and composed of a single polypeptide and one of four small RNA molecules. At least two isoforms are present in nucleated and red blood cells, and tissue specific differences in RO/SSA proteins have been identified. The common feature of these proteins is their ability to bind HY RNAs.2. Involved in the regulation of innate immunity and the inflammatory response in response to IFNG/IFN-gamma. Organizes autophagic machinery by serving as a platform for the assembly of ULK1, Beclin 1/BECN1 and ATG8 family members and recognizes specific autophagy targets, thus coordinating target recognition with assembly of the autophagic apparatus and initiation of autophagy. Also regulates autophagy through FIP200/RB1CC1 ubiquitination and subsequent decreased protein stability. Represses the innate antiviral response by facilitating the formation of the NMI-IFI35 complex through 'Lys-63'-linked ubiquitination of NMI. During viral infection, promotes cell pyroptosis by mediating 'Lys-6'-linked ubiquitination of ISG12a/IFI27, facilitating its translocation into the mitochondria and subsequent CASP3 activation. When up-regulated through the IFN/JAK/STAT signaling pathway, promotes 'Lys-27'-linked ubiquitination of MAVS, leading to the recruitment of TBK1 and up-regulation of innate immunity. Mediates 'Lys-63'-linked polyubiquitination of G3BP1 in response to heat shock, leading to stress granule disassembly. The chain is E3 ubiquitin-protein ligase TRIM21 (Trim21) from Mus musculus (Mouse).